We begin with the raw amino-acid sequence, 419 residues long: UDP-N-acetylglucosamine 1-carboxyvinyltransferase (419 aa).

22–23 is a binding site for phosphoenolpyruvate; the sequence is KN. Arg91 serves as a coordination point for UDP-N-acetyl-alpha-D-glucosamine. Cys115 (proton donor) is an active-site residue. The residue at position 115 (Cys115) is a 2-(S-cysteinyl)pyruvic acid O-phosphothioketal. UDP-N-acetyl-alpha-D-glucosamine-binding positions include 120 to 124, 160 to 163, Asp305, and Ile327; these read RPVDL and KVSV.

The protein belongs to the EPSP synthase family. MurA subfamily.

Its subcellular location is the cytoplasm. It carries out the reaction phosphoenolpyruvate + UDP-N-acetyl-alpha-D-glucosamine = UDP-N-acetyl-3-O-(1-carboxyvinyl)-alpha-D-glucosamine + phosphate. It participates in cell wall biogenesis; peptidoglycan biosynthesis. Functionally, cell wall formation. Adds enolpyruvyl to UDP-N-acetylglucosamine. In Cronobacter sakazakii (strain ATCC BAA-894) (Enterobacter sakazakii), this protein is UDP-N-acetylglucosamine 1-carboxyvinyltransferase.